The sequence spans 193 residues: Ion-translocating oxidoreductase complex subunit A (193 aa).

Helical transmembrane passes span 5–25 (LMLL…FLGL), 39–59 (IGMG…TWLI), 62–82 (FLLV…LVIA), 102–122 (VLGI…VALL), 134–154 (VLYG…FAGL), and 170–190 (APIS…FAGL).

It belongs to the NqrDE/RnfAE family. The complex is composed of six subunits: RnfA, RnfB, RnfC, RnfD, RnfE and RnfG.

Its subcellular location is the cell inner membrane. Functionally, part of a membrane-bound complex that couples electron transfer with translocation of ions across the membrane. The protein is Ion-translocating oxidoreductase complex subunit A of Azoarcus sp. (strain BH72).